The chain runs to 178 residues: Small ribosomal subunit protein uS5 (178 aa).

Residues 17–80 (FEERIVEIRR…AAARASVVEI (64 aa)) enclose the S5 DRBM domain.

Belongs to the universal ribosomal protein uS5 family. As to quaternary structure, part of the 30S ribosomal subunit. Contacts proteins S4 and S8.

Its function is as follows. With S4 and S12 plays an important role in translational accuracy. Located at the back of the 30S subunit body where it stabilizes the conformation of the head with respect to the body. This is Small ribosomal subunit protein uS5 from Pseudothermotoga lettingae (strain ATCC BAA-301 / DSM 14385 / NBRC 107922 / TMO) (Thermotoga lettingae).